A 785-amino-acid chain; its full sequence is Rho GTPase-activating protein 10 (785 aa).

In terms of domain architecture, BAR spans 7–262 (EFSDCYLDSP…IRQNPKDHKR (256 aa)). The PH domain occupies 265 to 372 (QFTAEGYLYV…WLEVLGGKEA (108 aa)). Residues 389–574 (AQLDKMGFTI…ILIENHEKIF (186 aa)) enclose the Rho-GAP domain. The segment at 576 to 708 (TPPDATLPEP…PAVTPPSPKL (133 aa)) is disordered. The segment covering 584 to 595 (EPGPLSAPPNAP) has biased composition (pro residues). Positions 598-608 (QSKRQGQRTKR) are enriched in basic residues. Basic and acidic residues predominate over residues 622–632 (GDRPSLPKEDT). Residues 633-650 (PPSSLDSLSSPSPTTATA) are compositionally biased toward low complexity. Residues 675–697 (APSQARSSAVQWLNPQSPTTPSC) are compositionally biased toward polar residues. The SH3 domain maps to 727–785 (IISRKARAVYPCEAEHSSELSFEIGAIFEDVQTSREPGWLEGTLNGKRGLIPQNYVKLL).

In terms of assembly, interacts with PKN3. Interacts with caspase-activated PAK2 proteolytic fragment PAK-2p34; the interaction does not affect ARHGAP10 GTPase activation activity towards RHOA and CDC42. Interacts via its SH3 domain with PTK2/FAK1. Interacts with PTK2B/PYK2; the interaction negatively regulates ARHGAP10 GTPase-activating activity. Interacts with MICAL1 and WDR44; complex formation might transit from GRAF2/ARHGAP10-MICAL1 to GRAF2/ARHGAP10-WDR44 complexes.

The protein localises to the cytoplasm. It localises to the perinuclear region. The protein resides in the cell membrane. Its subcellular location is the endosome membrane. In terms of biological role, GTPase-activating protein that catalyzes the conversion of active GTP-bound Rho GTPases to their inactive GDP-bound form, thus suppressing various Rho GTPase-mediated cellular processes. Also converts Cdc42 to an inactive GDP-bound state. Essential for PTKB2 regulation of cytoskeletal organization via Rho family GTPases. Inhibits PAK2 proteolytic fragment PAK-2p34 kinase activity and changes its localization from the nucleus to the perinuclear region. Stabilizes PAK-2p34 thereby increasing stimulation of cell death. Associates with MICAL1 on the endosomal membrane to promote Rab8-Rab10-dependent tubule extension. After dissociation with MICAL1, recruits WDR44 which connects the endoplasmic reticulum (ER) with the endosomal tubule, thereby participating in the export of a subset of neosynthesized proteins. In Bos taurus (Bovine), this protein is Rho GTPase-activating protein 10 (ARHGAP10).